Reading from the N-terminus, the 119-residue chain is Methylglyoxal synthase (119 aa).

Residues 1–119 (MKIALIAHDK…KTAELIIKQF (119 aa)) form the MGS-like domain. Substrate is bound by residues H8, K12, 34–37 (TGTT), and 54–55 (SG). D60 functions as the Proton donor/acceptor in the catalytic mechanism. Position 87 (H87) interacts with substrate.

The protein belongs to the methylglyoxal synthase family.

It carries out the reaction dihydroxyacetone phosphate = methylglyoxal + phosphate. Its function is as follows. Catalyzes the formation of methylglyoxal from dihydroxyacetone phosphate. The chain is Methylglyoxal synthase from Clostridium beijerinckii (strain ATCC 51743 / NCIMB 8052) (Clostridium acetobutylicum).